The following is an 86-amino-acid chain: Small ribosomal subunit protein bS20 (86 aa).

Residues 1–26 (MANIKSAKKRALQSEKSRKHNASRRT) form a disordered region.

This sequence belongs to the bacterial ribosomal protein bS20 family.

Functionally, binds directly to 16S ribosomal RNA. The polypeptide is Small ribosomal subunit protein bS20 (Psychromonas ingrahamii (strain DSM 17664 / CCUG 51855 / 37)).